The sequence spans 220 residues: 2-hydroxy-3-keto-5-methylthiopentenyl-1-phosphate phosphatase (220 aa).

Belongs to the HAD-like hydrolase superfamily. MtnX family.

It carries out the reaction 2-hydroxy-5-methylsulfanyl-3-oxopent-1-enyl phosphate + H2O = 1,2-dihydroxy-5-(methylsulfanyl)pent-1-en-3-one + phosphate. The protein operates within amino-acid biosynthesis; L-methionine biosynthesis via salvage pathway; L-methionine from S-methyl-5-thio-alpha-D-ribose 1-phosphate: step 4/6. Dephosphorylates 2-hydroxy-3-keto-5-methylthiopentenyl-1-phosphate (HK-MTPenyl-1-P) yielding 1,2-dihydroxy-3-keto-5-methylthiopentene (DHK-MTPene). This chain is 2-hydroxy-3-keto-5-methylthiopentenyl-1-phosphate phosphatase, found in Geobacillus thermodenitrificans (strain NG80-2).